The primary structure comprises 432 residues: Calcium uptake protein 2, mitochondrial (432 aa).

The N-terminal 22 residues, 1 to 22 (MAAAAGRSAWLAAWGGRLRRGL), are a transit peptide targeting the mitochondrion. In terms of domain architecture, EF-hand 1 spans 169–204 (KPHSGFHVAFKMLDVDGNEMIERKEFVKLQKIISKQ). Residues aspartate 182, aspartate 184, asparagine 186, methionine 188, glutamate 190, and glutamate 193 each coordinate Ca(2+). Serine 202 carries the phosphoserine modification. Positions 224 to 259 (EPGVNTTLQVRFFGKRGEKKLHYKEFRRFMENLQTE) constitute an EF-hand 2; degenerate domain. The EF-hand 3; degenerate domain occupies 290-325 (TENKDIYWRNVREKLSVGESISLDEFKSFCHFTTHL). An EF-hand 4 domain is found at 359-394 (LSDNLLDTVFKIFDLDGDECLSHGEFLGVLKNRMHR). 5 residues coordinate Ca(2+): aspartate 372, aspartate 374, aspartate 376, cysteine 378, and glutamate 383.

Belongs to the MICU1 family. MICU2 subfamily. As to quaternary structure, heterodimer; disulfide-linked; heterodimerizes with MICU1. Component of the uniplex complex, composed of MCU, EMRE/SMDT1, MICU1 and MICU2 in a 4:4:1:1 stoichiometry. In terms of tissue distribution, predominantly expressed in stomach, intestine, skeletal muscle, kidney, heart, testis, prostate and uterus.

It localises to the mitochondrion intermembrane space. The protein localises to the mitochondrion inner membrane. Its function is as follows. Calcium sensor of the mitochondrial calcium uniporter (MCU) channel, which senses calcium level via its EF-hand domains. MICU1 and MICU2 form a disulfide-linked heterodimer that stimulates and inhibits MCU activity, depending on the concentration of calcium. At low calcium levels, MICU1 occludes the pore of the MCU channel, preventing mitochondrial calcium uptake. At higher calcium levels, calcium-binding to MICU1 and MICU2 induces a conformational change that weakens MCU-MICU1 interactions and moves the MICU1-MICU2 heterodimer away from the pore, allowing calcium permeation through the MCU channel. In Mus musculus (Mouse), this protein is Calcium uptake protein 2, mitochondrial.